We begin with the raw amino-acid sequence, 69 residues long: Pancreatic propolypeptide YG (69 aa).

Belongs to the NPY family.

The protein localises to the secreted. The sequence is that of Pancreatic propolypeptide YG from Lophius americanus (American angler).